The following is a 506-amino-acid chain: Ent-kaurenoic acid oxidase (506 aa).

Residues 11–31 (AWAAGDLWVLAAAVVAGVVLV) form a helical membrane-spanning segment. Cys-451 contacts heme.

This sequence belongs to the cytochrome P450 family. Heme is required as a cofactor. Expressed in roots and panicles. Expressed at low levels in vegetative shoot apices, leaf sheaths, leaf blades and stems.

It is found in the endoplasmic reticulum membrane. It carries out the reaction ent-kaur-16-en-19-oate + 3 reduced [NADPH--hemoprotein reductase] + 3 O2 = gibberellin A12 + 3 oxidized [NADPH--hemoprotein reductase] + 4 H2O + 4 H(+). The enzyme catalyses ent-kaur-16-en-19-oate + reduced [NADPH--hemoprotein reductase] + O2 = ent-7alpha-hydroxykaur-16-en-19-oate + oxidized [NADPH--hemoprotein reductase] + H2O + H(+). The catalysed reaction is ent-7alpha-hydroxykaur-16-en-19-oate + reduced [NADPH--hemoprotein reductase] + O2 = gibberellin A12 aldehyde + oxidized [NADPH--hemoprotein reductase] + 2 H2O + H(+). It catalyses the reaction gibberellin A12 aldehyde + reduced [NADPH--hemoprotein reductase] + O2 = gibberellin A12 + oxidized [NADPH--hemoprotein reductase] + H2O + 2 H(+). It participates in plant hormone biosynthesis; gibberellin biosynthesis. Its function is as follows. Involved in gibberellin (GA) biosynthesis. Catalyzes three successive oxidations of ent-kaurenoic acid giving gibberellin 12 (GA12), a key step in GAs biosynthesis. GAs, which are involved many processes, including stem elongation, play a central role in plant development. Required for pollen germination and elongation. The protein is Ent-kaurenoic acid oxidase of Oryza sativa subsp. japonica (Rice).